The sequence spans 95 residues: RING finger protein Z (95 aa).

Glycine 2 carries N-myristoyl glycine; by host lipidation. The segment at cysteine 38 to cysteine 74 adopts an RING-type; atypical zinc-finger fold. Positions proline 88–proline 91 match the PTAP/PSAP motif motif.

This sequence belongs to the arenaviridae Z protein family. As to quaternary structure, interacts with protein NP; this interaction probably directs the encapsidated genome to budding sites. Interacts (via RING domain) with polymerase L; this interaction inhibits viral transcription and replication, Z partially blocks the product exit tunnel for the releasing nascent RNA product. Interacts with the glycoprotein complex; this interaction plays a role in virion budding. Interacts with host eIF4E; this interaction results in eIF4E reduced affinity for its substrate, the 5'-m7 G cap structure. Interacts (via late-budding domain) with host TSG101; this interaction is essential for budding and release of viral particles. Interacts with host RPLP0; this interaction may serve to load ribosome-like particles inside the virion. Interacts with host PML; this interaction induces PML bodies redistribution in the cytoplasm upon viral infection. Myristoylation is required for the role of RING finger protein Z in assembly and budding.

The protein resides in the virion. It is found in the host cytoplasm. The protein localises to the host perinuclear region. Its subcellular location is the host cell membrane. In terms of biological role, plays a crucial role in virion assembly and budding. Expressed late in the virus life cycle, it acts as an inhibitor of viral transcription and RNA synthesis by interacting with the viral polymerase L. Presumably recruits the NP encapsidated genome to cellular membranes at budding sites via direct interaction with NP. Plays critical roles in the final steps of viral release by interacting with host TSG101, a member of the vacuolar protein-sorting pathway and using other cellular host proteins involved in vesicle formation pathway. The budding of the virus progeny occurs after association of protein Z with the viral glycoprotein complex SSP-GP1-GP2 at the cell periphery, step that requires myristoylation of protein Z. Also selectively represses protein production by associating with host eIF4E. In cell-based minigenome assay, has an inhibitory effect on the ribonucleoprotein machinery (vRNP), which is responsible for the replication and transcription of the viral genome. The protein is RING finger protein Z of Pirital mammarenavirus (isolate Rat/Venezuela/VAV-488/1995) (PIRV).